Reading from the N-terminus, the 50-residue chain is Protein PsbN (50 aa).

A helical transmembrane segment spans residues 14–34 (IAVTILALLLALTGFGLWTAF).

Belongs to the PsbN family.

The protein resides in the cellular thylakoid membrane. In terms of biological role, may play a role in photosystem I and II biogenesis. This is Protein PsbN from Prochlorococcus marinus (strain MIT 9301).